Consider the following 150-residue polypeptide: Histone H2B.2 (150 aa).

Basic and acidic residues-rich tracts occupy residues 1–21 (MAPK…KAGE) and 33–49 (EKRL…EGKK). The disordered stretch occupies residues 1-58 (MAPKAEKKPAEKKPAEEKAGEKAPAAGKKPKAEKRLPASKGEKGGEGKKERGRKKAKK). Residues Lys7 and Lys34 each carry the N6-acetyllysine modification. Lys146 participates in a covalent cross-link: Glycyl lysine isopeptide (Lys-Gly) (interchain with G-Cter in ubiquitin).

Belongs to the histone H2B family. The nucleosome is a histone octamer containing two molecules each of H2A, H2B, H3 and H4 assembled in one H3-H4 heterotetramer and two H2A-H2B heterodimers. The octamer wraps approximately 147 bp of DNA. In terms of processing, can be acetylated to form H2BK6ac and H2BK33ac. Post-translationally, monoubiquitinated by BRE1 to form H2BK143ub1 and deubiquitinated by UBP26. Required for heterochromatic histone H3 di- and trimethylation at H3K4me. May give a specific tag for epigenetic transcriptional activation.

Its subcellular location is the nucleus. It is found in the chromosome. In terms of biological role, core component of nucleosome. Nucleosomes wrap and compact DNA into chromatin, limiting DNA accessibility to the cellular machineries which require DNA as a template. Histones thereby play a central role in transcription regulation, DNA repair, DNA replication and chromosomal stability. DNA accessibility is regulated via a complex set of post-translational modifications of histones, also called histone code, and nucleosome remodeling. The polypeptide is Histone H2B.2 (H2B.2) (Oryza sativa subsp. indica (Rice)).